The following is a 478-amino-acid chain: Protein nucleotidyltransferase YdiU (478 aa).

ATP is bound by residues G84, G86, R87, K107, D119, G120, R170, and R177. The active-site Proton acceptor is the D246. Mg(2+) is bound by residues N247 and D256. An ATP-binding site is contributed by D256.

It belongs to the SELO family. Requires Mg(2+) as cofactor. The cofactor is Mn(2+).

The catalysed reaction is L-seryl-[protein] + ATP = 3-O-(5'-adenylyl)-L-seryl-[protein] + diphosphate. It catalyses the reaction L-threonyl-[protein] + ATP = 3-O-(5'-adenylyl)-L-threonyl-[protein] + diphosphate. The enzyme catalyses L-tyrosyl-[protein] + ATP = O-(5'-adenylyl)-L-tyrosyl-[protein] + diphosphate. It carries out the reaction L-histidyl-[protein] + UTP = N(tele)-(5'-uridylyl)-L-histidyl-[protein] + diphosphate. The catalysed reaction is L-seryl-[protein] + UTP = O-(5'-uridylyl)-L-seryl-[protein] + diphosphate. It catalyses the reaction L-tyrosyl-[protein] + UTP = O-(5'-uridylyl)-L-tyrosyl-[protein] + diphosphate. In terms of biological role, nucleotidyltransferase involved in the post-translational modification of proteins. It can catalyze the addition of adenosine monophosphate (AMP) or uridine monophosphate (UMP) to a protein, resulting in modifications known as AMPylation and UMPylation. This Escherichia coli O1:K1 / APEC protein is Protein nucleotidyltransferase YdiU.